The chain runs to 392 residues: Tryptophan synthase beta chain (392 aa).

Lysine 84 is subject to N6-(pyridoxal phosphate)lysine.

The protein belongs to the TrpB family. Tetramer of two alpha and two beta chains. Pyridoxal 5'-phosphate serves as cofactor.

It carries out the reaction (1S,2R)-1-C-(indol-3-yl)glycerol 3-phosphate + L-serine = D-glyceraldehyde 3-phosphate + L-tryptophan + H2O. The protein operates within amino-acid biosynthesis; L-tryptophan biosynthesis; L-tryptophan from chorismate: step 5/5. Functionally, the beta subunit is responsible for the synthesis of L-tryptophan from indole and L-serine. This is Tryptophan synthase beta chain (trpB) from Chlamydia trachomatis serovar D (strain ATCC VR-885 / DSM 19411 / UW-3/Cx).